The following is a 649-amino-acid chain: 1,4-alpha-glucan branching enzyme GlgB (649 aa).

Asp-315 serves as the catalytic Nucleophile. The Proton donor role is filled by Glu-366.

Belongs to the glycosyl hydrolase 13 family. GlgB subfamily. As to quaternary structure, monomer.

The enzyme catalyses Transfers a segment of a (1-&gt;4)-alpha-D-glucan chain to a primary hydroxy group in a similar glucan chain.. It functions in the pathway glycan biosynthesis; glycogen biosynthesis. In terms of biological role, catalyzes the formation of the alpha-1,6-glucosidic linkages in glycogen by scission of a 1,4-alpha-linked oligosaccharide from growing alpha-1,4-glucan chains and the subsequent attachment of the oligosaccharide to the alpha-1,6 position. This Ligilactobacillus salivarius (strain UCC118) (Lactobacillus salivarius) protein is 1,4-alpha-glucan branching enzyme GlgB.